The primary structure comprises 72 residues: Translation initiation factor IF-1 (72 aa).

Residues 2 to 72 (AKEDVIEVEG…TRGRITYRYK (71 aa)) form the S1-like domain. Tyr-60 carries the post-translational modification Phosphotyrosine.

This sequence belongs to the IF-1 family. In terms of assembly, component of the 30S ribosomal translation pre-initiation complex which assembles on the 30S ribosome in the order IF-2 and IF-3, IF-1 and N-formylmethionyl-tRNA(fMet); mRNA recruitment can occur at any time during PIC assembly.

The protein resides in the cytoplasm. Its function is as follows. One of the essential components for the initiation of protein synthesis. Stabilizes the binding of IF-2 and IF-3 on the 30S subunit to which N-formylmethionyl-tRNA(fMet) subsequently binds. Helps modulate mRNA selection, yielding the 30S pre-initiation complex (PIC). Upon addition of the 50S ribosomal subunit IF-1, IF-2 and IF-3 are released leaving the mature 70S translation initiation complex. The protein is Translation initiation factor IF-1 of Halalkalibacterium halodurans (strain ATCC BAA-125 / DSM 18197 / FERM 7344 / JCM 9153 / C-125) (Bacillus halodurans).